Here is a 25-residue protein sequence, read N- to C-terminus: Kunitz-type serine protease inhibitor 4 (25 aa).

The BPTI/Kunitz inhibitor domain occupies 7–25 (TCYLPKETGPCVGYFFRYY).

It is found in the secreted. Its function is as follows. Inhibits trypsin, human plasma kallikrein and human neutrophil elastase. This Rhipicephalus microplus (Cattle tick) protein is Kunitz-type serine protease inhibitor 4.